Here is a 31-residue protein sequence, read N- to C-terminus: Sarcolipin (31 aa).

Residues 1–7 (MERSTRE) are Cytoplasmic-facing. Residues 8–26 (LCLNFTVVLITVILIWLLV) form a helical membrane-spanning segment. The Lumenal portion of the chain corresponds to 27–31 (RSYQY).

It belongs to the sarcolipin family. Homooligomer. Can also form heterooligomers with other sarcoplasmic/endoplasmic reticulum calcium ATPase (SERCA) regulators ARLN, ERLN, PLN and STRIT1/DWORF. Monomer. Interacts with calcium ATPase ATP2A1/SERCA1. Interacts as a monomer with ATP2A2/SERCA2; the interaction decreases ATP2A2 Ca(2+) affinity. Interacts with VMP1; VMP1 competes with PLN and SLN to prevent them from forming an inhibitory complex with ATP2A2. In terms of tissue distribution, skeletal muscle (at protein level).

It is found in the sarcoplasmic reticulum membrane. The protein localises to the endoplasmic reticulum membrane. Its function is as follows. Reversibly inhibits the activity of ATP2A1/SERCA1 and ATP2A2/SERCA2 in sarcoplasmic reticulum by decreasing the apparent affinity of the ATPase for Ca(2+). Also inhibits the activity of ATP2A3/SERCA3. Modulates calcium re-uptake during muscle relaxation and plays an important role in calcium homeostasis in muscle. Required for muscle-based, non-shivering thermogenesis. The chain is Sarcolipin (SLN) from Oryctolagus cuniculus (Rabbit).